Here is a 337-residue protein sequence, read N- to C-terminus: Inositol 2-dehydrogenase (337 aa).

Belongs to the Gfo/Idh/MocA family. In terms of assembly, homotetramer.

The catalysed reaction is myo-inositol + NAD(+) = scyllo-inosose + NADH + H(+). Functionally, involved in the oxidation of myo-inositol (MI) to 2-keto-myo-inositol (2KMI or 2-inosose). This chain is Inositol 2-dehydrogenase, found in Gluconacetobacter diazotrophicus (strain ATCC 49037 / DSM 5601 / CCUG 37298 / CIP 103539 / LMG 7603 / PAl5).